The primary structure comprises 320 residues: Geranylgeranyl pyrophosphate synthase (320 aa).

Residues lysine 35, arginine 38, and histidine 67 each coordinate isopentenyl diphosphate. Mg(2+)-binding residues include aspartate 74 and aspartate 78. Residue arginine 83 coordinates dimethylallyl diphosphate. Residue arginine 84 coordinates isopentenyl diphosphate. Dimethylallyl diphosphate contacts are provided by lysine 168, threonine 169, glutamine 206, lysine 223, and lysine 233.

The protein belongs to the FPP/GGPP synthase family. Mg(2+) serves as cofactor.

The protein localises to the cytoplasm. It catalyses the reaction isopentenyl diphosphate + dimethylallyl diphosphate = (2E)-geranyl diphosphate + diphosphate. The catalysed reaction is isopentenyl diphosphate + (2E)-geranyl diphosphate = (2E,6E)-farnesyl diphosphate + diphosphate. It carries out the reaction isopentenyl diphosphate + (2E,6E)-farnesyl diphosphate = (2E,6E,10E)-geranylgeranyl diphosphate + diphosphate. It functions in the pathway isoprenoid biosynthesis; farnesyl diphosphate biosynthesis; farnesyl diphosphate from geranyl diphosphate and isopentenyl diphosphate: step 1/1. It participates in isoprenoid biosynthesis; geranyl diphosphate biosynthesis; geranyl diphosphate from dimethylallyl diphosphate and isopentenyl diphosphate: step 1/1. Its pathway is isoprenoid biosynthesis; geranylgeranyl diphosphate biosynthesis; geranylgeranyl diphosphate from farnesyl diphosphate and isopentenyl diphosphate: step 1/1. In terms of biological role, catalyzes the trans-addition of the 3 molecules of IPP onto DMAPP to form geranylgeranyl pyrophosphate. May be involved in vesicle trafficking and protein sorting. In Eremothecium gossypii (strain ATCC 10895 / CBS 109.51 / FGSC 9923 / NRRL Y-1056) (Yeast), this protein is Geranylgeranyl pyrophosphate synthase (BTS1).